Consider the following 379-residue polypeptide: MANLRKTHPLLKIANDALVDLPTPSNISAWWNFGSLLGLCLISQIITGLFLAMHYTSDISTAFSSVAHICRDVNYGWLIRNLHANGASFFFICLYLHIARGLYYGSYLYKETWNIGVVLFLLVMMTAFVGYVLPWGQMSFWGATVITNLLSAVPYVGDSLVQWIWGGFSVDNATLTRFFAFHFLFPFVVAGATMIHLLFLHETGSNNPVGLNSDADKIPFHPYFSYKDLLGFIIMLTALTMLALFYPNLLGDPDNFTPANPMVTPPHIKPEWYFLFAYAILRSIPNKLGGVLALLSSILVLMVVPILHTSKQRGLTFRPASQLLFWILVADMLVLTWIGGMPVEHPYIIIGQVASVLYFSLFLVLNPLVGWLENKMMNW.

The next 4 membrane-spanning stretches (helical) occupy residues 33–53, 77–98, 113–133, and 178–198; these read FGSLLGLCLISQIITGLFLAM, WLIRNLHANGASFFFICLYLHI, WNIGVVLFLLVMMTAFVGYVL, and FFAFHFLFPFVVAGATMIHLL. Positions 83 and 97 each coordinate heme b. Residues His182 and His196 each coordinate heme b. His201 is an a ubiquinone binding site. A run of 4 helical transmembrane segments spans residues 226–246, 288–308, 320–340, and 347–367; these read YKDLLGFIIMLTALTMLALFY, LGGVLALLSSILVLMVVPILH, ASQLLFWILVADMLVLTWIGG, and YIIIGQVASVLYFSLFLVLNP.

The protein belongs to the cytochrome b family. As to quaternary structure, the cytochrome bc1 complex contains 3 respiratory subunits (MT-CYB, CYC1 and UQCRFS1), 2 core proteins (UQCRC1 and UQCRC2) and probably 6 low-molecular weight proteins. Heme b serves as cofactor.

It is found in the mitochondrion inner membrane. Its function is as follows. Component of the ubiquinol-cytochrome c reductase complex (complex III or cytochrome b-c1 complex) that is part of the mitochondrial respiratory chain. The b-c1 complex mediates electron transfer from ubiquinol to cytochrome c. Contributes to the generation of a proton gradient across the mitochondrial membrane that is then used for ATP synthesis. The polypeptide is Cytochrome b (mt-cyb) (Anguilla interioris (Highlands long-finned eel)).